A 477-amino-acid polypeptide reads, in one-letter code: Ribulose bisphosphate carboxylase large chain (477 aa).

A propeptide spanning residues 1 to 2 is cleaved from the precursor; sequence MS. Position 3 is an N-acetylproline (P3). K14 is subject to N6,N6,N6-trimethyllysine. N123 and T173 together coordinate substrate. K175 serves as the catalytic Proton acceptor. K177 is a binding site for substrate. Mg(2+)-binding residues include K201, D203, and E204. Position 201 is an N6-carboxylysine (K201). H294 serves as the catalytic Proton acceptor. R295, H327, and S379 together coordinate substrate.

The protein belongs to the RuBisCO large chain family. Type I subfamily. As to quaternary structure, heterohexadecamer of 8 large chains and 8 small chains; disulfide-linked. The disulfide link is formed within the large subunit homodimers. Mg(2+) is required as a cofactor. Post-translationally, the disulfide bond which can form in the large chain dimeric partners within the hexadecamer appears to be associated with oxidative stress and protein turnover.

It is found in the plastid. The protein resides in the chloroplast. It catalyses the reaction 2 (2R)-3-phosphoglycerate + 2 H(+) = D-ribulose 1,5-bisphosphate + CO2 + H2O. The enzyme catalyses D-ribulose 1,5-bisphosphate + O2 = 2-phosphoglycolate + (2R)-3-phosphoglycerate + 2 H(+). Its function is as follows. RuBisCO catalyzes two reactions: the carboxylation of D-ribulose 1,5-bisphosphate, the primary event in carbon dioxide fixation, as well as the oxidative fragmentation of the pentose substrate in the photorespiration process. Both reactions occur simultaneously and in competition at the same active site. This chain is Ribulose bisphosphate carboxylase large chain, found in Dioscorea elephantipes (Elephant's foot yam).